A 340-amino-acid polypeptide reads, in one-letter code: Meiotic recombination protein DMC1/LIM15 homolog (340 aa).

126-133 is an ATP binding site; that stretch reads GEFRTGKT. Arginine 230 contacts dsDNA. The ssDNA site is built by arginine 230, phenylalanine 233, arginine 236, arginine 242, and arginine 311. DsDNA is bound by residues arginine 236 and arginine 242.

It belongs to the RecA family. DMC1 subfamily. Double stacked ring-shaped homooctamer. Interacts with BRCA2. Interacts with the MND1-PSMC3IP heterodimer. Interacts with RAD51AP1; the interaction is direct and stimulates DMC1-mediated homologous recombination. In terms of tissue distribution, testis.

Its subcellular location is the nucleus. It localises to the chromosome. Its function is as follows. Participates in meiotic recombination, specifically in homologous strand assimilation, which is required for the resolution of meiotic double-strand breaks. In Mus musculus (Mouse), this protein is Meiotic recombination protein DMC1/LIM15 homolog.